The primary structure comprises 285 residues: Glutamate racemase (285 aa).

Residues 30 to 31 (DS) and 62 to 63 (YG) each bind substrate. Catalysis depends on Cys-94, which acts as the Proton donor/acceptor. Substrate is bound at residue 95 to 96 (NT). Cys-206 serves as the catalytic Proton donor/acceptor. 207–208 (TH) contacts substrate.

Belongs to the aspartate/glutamate racemases family.

It catalyses the reaction L-glutamate = D-glutamate. Its pathway is cell wall biogenesis; peptidoglycan biosynthesis. Provides the (R)-glutamate required for cell wall biosynthesis. This Pectobacterium carotovorum subsp. carotovorum (strain PC1) protein is Glutamate racemase.